A 152-amino-acid polypeptide reads, in one-letter code: Large ribosomal subunit protein uL13 (152 aa).

Belongs to the universal ribosomal protein uL13 family. As to quaternary structure, part of the 50S ribosomal subunit.

In terms of biological role, this protein is one of the early assembly proteins of the 50S ribosomal subunit, although it is not seen to bind rRNA by itself. It is important during the early stages of 50S assembly. This is Large ribosomal subunit protein uL13 from Borreliella afzelii (strain PKo) (Borrelia afzelii).